A 137-amino-acid chain; its full sequence is CUB domain-containing protein (137 aa).

The first 21 residues, methionine 1–alanine 21, serve as a signal peptide directing secretion. 2 disulfide bridges follow: cysteine 30–cysteine 51 and cysteine 75–cysteine 96. Residues cysteine 30–aspartate 132 enclose the CUB domain.

The protein is CUB domain-containing protein of Homo sapiens (Human).